The chain runs to 437 residues: 3-phosphoshikimate 1-carboxyvinyltransferase (437 aa).

Residues lysine 21, serine 22, and arginine 26 each contribute to the 3-phosphoshikimate site. A phosphoenolpyruvate-binding site is contributed by lysine 21. Residues glycine 101 and arginine 129 each coordinate phosphoenolpyruvate. Positions 172, 173, 174, 200, 314, and 341 each coordinate 3-phosphoshikimate. Glutamine 174 serves as a coordination point for phosphoenolpyruvate. Aspartate 314 acts as the Proton acceptor in catalysis. Residues arginine 345, arginine 388, and lysine 414 each contribute to the phosphoenolpyruvate site.

The protein belongs to the EPSP synthase family. Monomer.

The protein localises to the cytoplasm. The catalysed reaction is 3-phosphoshikimate + phosphoenolpyruvate = 5-O-(1-carboxyvinyl)-3-phosphoshikimate + phosphate. Its pathway is metabolic intermediate biosynthesis; chorismate biosynthesis; chorismate from D-erythrose 4-phosphate and phosphoenolpyruvate: step 6/7. Catalyzes the transfer of the enolpyruvyl moiety of phosphoenolpyruvate (PEP) to the 5-hydroxyl of shikimate-3-phosphate (S3P) to produce enolpyruvyl shikimate-3-phosphate and inorganic phosphate. This chain is 3-phosphoshikimate 1-carboxyvinyltransferase, found in Clostridioides difficile (strain 630) (Peptoclostridium difficile).